The following is a 303-amino-acid chain: Recombination-associated protein RdgC (303 aa).

Belongs to the RdgC family.

It is found in the cytoplasm. The protein resides in the nucleoid. Its function is as follows. May be involved in recombination. This chain is Recombination-associated protein RdgC, found in Pseudoalteromonas translucida (strain TAC 125).